We begin with the raw amino-acid sequence, 94 residues long: PTS system galactitol-specific EIIB component (94 aa).

One can recognise a PTS EIIB type-2 domain in the interval 1–94 (MKRKIIVACG…QNKILTILQG (94 aa)). Cys9 (phosphocysteine intermediate; for EIIB activity) is an active-site residue. At Cys9 the chain carries Phosphocysteine; by EIIA.

Forms a complex with one each of subunit of GatA, GatB and 2 subunits of GatC.

Its subcellular location is the cytoplasm. It carries out the reaction galactitol(out) + N(pros)-phospho-L-histidyl-[protein] = galactitol 1-phosphate(in) + L-histidyl-[protein]. Functionally, the phosphoenolpyruvate-dependent sugar phosphotransferase system (PTS), a major carbohydrate active transport system, catalyzes the phosphorylation of incoming sugar substrates concomitant with their translocation across the cell membrane. The enzyme II complex composed of GatA, GatB and GatC is involved in galactitol transport. This chain is PTS system galactitol-specific EIIB component (gatB), found in Escherichia coli O157:H7.